A 331-amino-acid chain; its full sequence is Adenosine deaminase (331 aa).

Zn(2+) is bound by residues His-12 and His-14. Positions 14, 16, and 170 each coordinate substrate. His-197 lines the Zn(2+) pocket. Glu-200 functions as the Proton donor in the catalytic mechanism. Asp-278 contributes to the Zn(2+) binding site. Asp-279 serves as a coordination point for substrate.

It belongs to the metallo-dependent hydrolases superfamily. Adenosine and AMP deaminases family. Adenosine deaminase subfamily. Zn(2+) is required as a cofactor.

The catalysed reaction is adenosine + H2O + H(+) = inosine + NH4(+). It carries out the reaction 2'-deoxyadenosine + H2O + H(+) = 2'-deoxyinosine + NH4(+). Its function is as follows. Catalyzes the hydrolytic deamination of adenosine and 2-deoxyadenosine. This is Adenosine deaminase from Shewanella loihica (strain ATCC BAA-1088 / PV-4).